Consider the following 242-residue polypeptide: Small ribosomal subunit protein uS2 (242 aa).

This sequence belongs to the universal ribosomal protein uS2 family.

In Shewanella denitrificans (strain OS217 / ATCC BAA-1090 / DSM 15013), this protein is Small ribosomal subunit protein uS2.